Consider the following 352-residue polypeptide: Heat-inducible transcription repressor HrcA (352 aa).

Belongs to the HrcA family.

Functionally, negative regulator of class I heat shock genes (grpE-dnaK-dnaJ and groELS operons). Prevents heat-shock induction of these operons. The chain is Heat-inducible transcription repressor HrcA from Thermosynechococcus vestitus (strain NIES-2133 / IAM M-273 / BP-1).